A 97-amino-acid polypeptide reads, in one-letter code: Co-chaperonin GroES (97 aa).

This sequence belongs to the GroES chaperonin family. In terms of assembly, heptamer of 7 subunits arranged in a ring. Interacts with the chaperonin GroEL.

It is found in the cytoplasm. Its function is as follows. Together with the chaperonin GroEL, plays an essential role in assisting protein folding. The GroEL-GroES system forms a nano-cage that allows encapsulation of the non-native substrate proteins and provides a physical environment optimized to promote and accelerate protein folding. GroES binds to the apical surface of the GroEL ring, thereby capping the opening of the GroEL channel. The protein is Co-chaperonin GroES of Elusimicrobium minutum (strain Pei191).